A 357-amino-acid polypeptide reads, in one-letter code: Anthranilate phosphoribosyltransferase (357 aa).

5-phospho-alpha-D-ribose 1-diphosphate-binding positions include Gly94, 97-98 (GD), Thr102, 104-107 (NLST), 122-130 (KHGNRAASS), and Gly134. Anthranilate is bound at residue Gly94. Ser106 is a binding site for Mg(2+). Asn125 serves as a coordination point for anthranilate. Arg180 contributes to the anthranilate binding site. 2 residues coordinate Mg(2+): Asp238 and Glu239.

It belongs to the anthranilate phosphoribosyltransferase family. Homodimer. Mg(2+) serves as cofactor.

It carries out the reaction N-(5-phospho-beta-D-ribosyl)anthranilate + diphosphate = 5-phospho-alpha-D-ribose 1-diphosphate + anthranilate. The protein operates within amino-acid biosynthesis; L-tryptophan biosynthesis; L-tryptophan from chorismate: step 2/5. Its function is as follows. Catalyzes the transfer of the phosphoribosyl group of 5-phosphorylribose-1-pyrophosphate (PRPP) to anthranilate to yield N-(5'-phosphoribosyl)-anthranilate (PRA). This chain is Anthranilate phosphoribosyltransferase, found in Mycobacterium sp. (strain JLS).